The sequence spans 132 residues: Small ribosomal subunit protein bS6 (132 aa).

The interval 99–132 is disordered; that stretch reads ASPMVKAKDERRGDRREDFANETADDADAGDSEE. Residues 104–117 show a composition bias toward basic and acidic residues; it reads KAKDERRGDRREDF. Residues 121–132 show a composition bias toward acidic residues; the sequence is TADDADAGDSEE.

The protein belongs to the bacterial ribosomal protein bS6 family.

Binds together with bS18 to 16S ribosomal RNA. The protein is Small ribosomal subunit protein bS6 of Serratia proteamaculans (strain 568).